The primary structure comprises 456 residues: Serine--tRNA ligase (456 aa).

Disordered stretches follow at residues 107 to 130 and 229 to 253; these read PHSSVPEGRSESDNREVRRWGTPP and FLENQPVAATLPSNSNSPQGGQDDD. A compositionally biased stretch (basic and acidic residues) spans 114-125; it reads GRSESDNREVRR. Residues 239 to 248 show a composition bias toward polar residues; the sequence is LPSNSNSPQG. 260–262 contacts L-serine; that stretch reads TSE. 291-293 serves as a coordination point for ATP; it reads RSE. Glu-314 provides a ligand contact to L-serine. 378–381 serves as a coordination point for ATP; it reads EISS. Residue Ser-413 coordinates L-serine.

This sequence belongs to the class-II aminoacyl-tRNA synthetase family. Type-1 seryl-tRNA synthetase subfamily. As to quaternary structure, homodimer. The tRNA molecule binds across the dimer.

Its subcellular location is the cytoplasm. It carries out the reaction tRNA(Ser) + L-serine + ATP = L-seryl-tRNA(Ser) + AMP + diphosphate + H(+). It catalyses the reaction tRNA(Sec) + L-serine + ATP = L-seryl-tRNA(Sec) + AMP + diphosphate + H(+). The protein operates within aminoacyl-tRNA biosynthesis; selenocysteinyl-tRNA(Sec) biosynthesis; L-seryl-tRNA(Sec) from L-serine and tRNA(Sec): step 1/1. In terms of biological role, catalyzes the attachment of serine to tRNA(Ser). Is also able to aminoacylate tRNA(Sec) with serine, to form the misacylated tRNA L-seryl-tRNA(Sec), which will be further converted into selenocysteinyl-tRNA(Sec). In Nitrosospira multiformis (strain ATCC 25196 / NCIMB 11849 / C 71), this protein is Serine--tRNA ligase.